Reading from the N-terminus, the 131-residue chain is Small ribosomal subunit protein uS8 (131 aa).

It belongs to the universal ribosomal protein uS8 family. Part of the 30S ribosomal subunit. Contacts proteins S5 and S12.

Its function is as follows. One of the primary rRNA binding proteins, it binds directly to 16S rRNA central domain where it helps coordinate assembly of the platform of the 30S subunit. The protein is Small ribosomal subunit protein uS8 of Parabacteroides distasonis (strain ATCC 8503 / DSM 20701 / CIP 104284 / JCM 5825 / NCTC 11152).